Reading from the N-terminus, the 451-residue chain is Tubulin alpha-2 chain (451 aa).

Gln11 provides a ligand contact to GTP. Position 40 is an N6-acetyllysine (Lys40). Residues Glu71, Gly144, Thr145, Thr179, Asn206, and Asn228 each coordinate GTP. Residue Glu71 participates in Mg(2+) binding. Glu254 is an active-site residue.

It belongs to the tubulin family. As to quaternary structure, dimer of alpha and beta chains. A typical microtubule is a hollow water-filled tube with an outer diameter of 25 nm and an inner diameter of 15 nM. Alpha-beta heterodimers associate head-to-tail to form protofilaments running lengthwise along the microtubule wall with the beta-tubulin subunit facing the microtubule plus end conferring a structural polarity. Microtubules usually have 13 protofilaments but different protofilament numbers can be found in some organisms and specialized cells. It depends on Mg(2+) as a cofactor. Post-translationally, undergoes a tyrosination/detyrosination cycle, the cyclic removal and re-addition of a C-terminal tyrosine residue by the enzymes tubulin tyrosine carboxypeptidase (TTCP) and tubulin tyrosine ligase (TTL), respectively. Acetylation of alpha chains at Lys-40 stabilizes microtubules and affects affinity and processivity of microtubule motors. This modification has a role in multiple cellular functions, ranging from cell motility, cell cycle progression or cell differentiation to intracellular trafficking and signaling.

It is found in the cytoplasm. The protein localises to the cytoskeleton. It carries out the reaction GTP + H2O = GDP + phosphate + H(+). Tubulin is the major constituent of microtubules, a cylinder consisting of laterally associated linear protofilaments composed of alpha- and beta-tubulin heterodimers. Microtubules grow by the addition of GTP-tubulin dimers to the microtubule end, where a stabilizing cap forms. Below the cap, tubulin dimers are in GDP-bound state, owing to GTPase activity of alpha-tubulin. The sequence is that of Tubulin alpha-2 chain (TUBA2) from Zea mays (Maize).